A 424-amino-acid polypeptide reads, in one-letter code: Calreticulin (424 aa).

The signal sequence occupies residues 1 to 19 (MRLLLCLIFLVFVFNFALS). C105 and C137 are disulfide-bonded. Residues Y109, K111, Y128, and D135 each coordinate an alpha-D-glucoside. Tandem repeats lie at residues 191–202 (IQAGNLADDWEL), 210–221 (DPKQSKPVDWVD), 227–238 (DPEDVKPAGHDD), 246–256 (PEAVKPEDWNE), 260–270 (GEWEAPTIANP), 274–284 (GEWKAKKIPNP), and 288–298 (GEWVHPLIDNP). The 4 X 12 AA approximate repeats stretch occupies residues 191–256 (IQAGNLADDW…EAVKPEDWNE (66 aa)). The interval 260–298 (GEWEAPTIANPEYKGEWKAKKIPNPEYKGEWVHPLIDNP) is 3 X 11 AA approximate repeats. E318 serves as a coordination point for an alpha-D-glucoside. Residues 370–385 (RKKADEKLAAEKAAEK) are compositionally biased toward basic and acidic residues. The interval 370 to 424 (RKKADEKLAAEKAAEKEAEEADEEEEEVAEEDLVKTDDKKEEVKKSTKKVDHDEL) is disordered. Residues 386–400 (EAEEADEEEEEVAEE) show a composition bias toward acidic residues. Positions 401–424 (DLVKTDDKKEEVKKSTKKVDHDEL) are enriched in basic and acidic residues. A Prevents secretion from ER motif is present at residues 421 to 424 (HDEL).

Belongs to the calreticulin family.

The protein resides in the endoplasmic reticulum lumen. Functionally, molecular calcium-binding chaperone promoting folding, oligomeric assembly and quality control in the ER via the calreticulin/calnexin cycle. This lectin may interact transiently with almost all of the monoglucosylated glycoproteins that are synthesized in the ER. This chain is Calreticulin (crtA), found in Dictyostelium discoideum (Social amoeba).